The chain runs to 554 residues: 5'-AMP-activated protein kinase catalytic subunit alpha-1 (554 aa).

One can recognise a Protein kinase domain in the interval Tyr22–Phe274. Phosphothreonine is present on Thr27. ATP contacts are provided by residues Leu28–Val36 and Lys51. Asp145 (proton acceptor) is an active-site residue. At Thr178 the chain carries Phosphothreonine; by LKB1 and CaMKK2. A phosphothreonine mark is found at Thr264 and Thr350. The tract at residues Glu297 to Glu376 is AIS. Position 351 is a phosphoserine (Ser351). Phosphoserine; by ULK1 is present on Ser355. Phosphothreonine; by ULK1 is present on Thr363. A Phosphothreonine modification is found at Thr377. At Ser392 the chain carries Phosphoserine; by ULK1. Phosphoserine is present on Ser462. A compositionally biased stretch (polar residues) spans Lys480–Arg500. The tract at residues Lys480–Thr531 is disordered. Ser481 is subject to Phosphoserine; by ULK1. Thr483 is modified (phosphothreonine; by ULK1). At Thr485 the chain carries Phosphothreonine. 4 positions are modified to phosphoserine: Ser491, Ser503, Ser519, and Ser522. Residues Ser511–Leu530 are compositionally biased toward low complexity.

Belongs to the protein kinase superfamily. CAMK Ser/Thr protein kinase family. SNF1 subfamily. As to quaternary structure, AMPK is a heterotrimer of an alpha catalytic subunit (PRKAA1 or PRKAA2), a beta (PRKAB1 or PRKAB2) and a gamma non-catalytic subunits (PRKAG1, PRKAG2 or PRKAG3). Interacts with FNIP1 and FNIP2. Requires Mg(2+) as cofactor. Post-translationally, ubiquitinated. Phosphorylated at Thr-183 by STK11/LKB1 in complex with STE20-related adapter-alpha (STRADA) pseudo kinase and CAB39. Also phosphorylated at Thr-183 by CAMKK2; triggered by a rise in intracellular calcium ions, without detectable changes in the AMP/ATP ratio. CAMKK1 can also phosphorylate Thr-183, but at a much lower level. Dephosphorylated by protein phosphatase 2A and 2C (PP2A and PP2C). Phosphorylated by ULK1 and ULK2; leading to negatively regulate AMPK activity and suggesting the existence of a regulatory feedback loop between ULK1, ULK2 and AMPK. Dephosphorylated by PPM1A and PPM1B. In terms of processing, glycosylated; O-GlcNAcylated by OGT, promoting the AMP-activated protein kinase (AMPK) activity.

It is found in the cytoplasm. The protein localises to the nucleus. It carries out the reaction L-seryl-[protein] + ATP = O-phospho-L-seryl-[protein] + ADP + H(+). The enzyme catalyses L-threonyl-[protein] + ATP = O-phospho-L-threonyl-[protein] + ADP + H(+). It catalyses the reaction L-seryl-[acetyl-CoA carboxylase] + ATP = O-phospho-L-seryl-[acetyl-CoA carboxylase] + ADP + H(+). The catalysed reaction is L-seryl-[3-hydroxy-3-methylglutaryl-coenzyme A reductase] + ATP = O-phospho-L-seryl-[3-hydroxy-3-methylglutaryl-coenzyme A reductase] + ADP + H(+). It carries out the reaction L-seryl-[tau protein] + ATP = O-phospho-L-seryl-[tau protein] + ADP + H(+). The enzyme catalyses L-threonyl-[tau protein] + ATP = O-phospho-L-threonyl-[tau protein] + ADP + H(+). Activated by phosphorylation on Thr-183. Binding of AMP to non-catalytic gamma subunit (PRKAG1, PRKAG2 or PRKAG3) results in allosteric activation, inducing phosphorylation on Thr-183. AMP-binding to gamma subunit also sustains activity by preventing dephosphorylation of Thr-183. ADP also stimulates Thr-183 phosphorylation, without stimulating already phosphorylated AMPK. ATP promotes dephosphorylation of Thr-183, rendering the enzyme inactive. Under physiological conditions AMPK mainly exists in its inactive form in complex with ATP, which is much more abundant than AMP. Selectively inhibited by compound C (6-[4-(2-Piperidin-1-yl-ethoxy)-phenyl)]-3-pyridin-4-yl-pyyrazolo[1,5-a] pyrimidine. Activated by resveratrol, a natural polyphenol present in red wine, and S17834, a synthetic polyphenol. Catalytic subunit of AMP-activated protein kinase (AMPK), an energy sensor protein kinase that plays a key role in regulating cellular energy metabolism. In response to reduction of intracellular ATP levels, AMPK activates energy-producing pathways and inhibits energy-consuming processes: inhibits protein, carbohydrate and lipid biosynthesis, as well as cell growth and proliferation. AMPK acts via direct phosphorylation of metabolic enzymes, and by longer-term effects via phosphorylation of transcription regulators. Regulates lipid synthesis by phosphorylating and inactivating lipid metabolic enzymes such as ACACA, ACACB, GYS1, HMGCR and LIPE; regulates fatty acid and cholesterol synthesis by phosphorylating acetyl-CoA carboxylase (ACACA and ACACB) and hormone-sensitive lipase (LIPE) enzymes, respectively. Promotes lipolysis of lipid droplets by mediating phosphorylation of isoform 1 of CHKA (CHKalpha2). Regulates insulin-signaling and glycolysis by phosphorylating IRS1, PFKFB2 and PFKFB3. AMPK stimulates glucose uptake in muscle by increasing the translocation of the glucose transporter SLC2A4/GLUT4 to the plasma membrane, possibly by mediating phosphorylation of TBC1D4/AS160. Regulates transcription and chromatin structure by phosphorylating transcription regulators involved in energy metabolism such as CRTC2/TORC2, FOXO3, histone H2B, HDAC5, MEF2C, MLXIPL/ChREBP, EP300, HNF4A, p53/TP53, SREBF1, SREBF2 and PPARGC1A. Acts as a key regulator of glucose homeostasis in liver by phosphorylating CRTC2/TORC2, leading to CRTC2/TORC2 sequestration in the cytoplasm. In response to stress, phosphorylates 'Ser-36' of histone H2B (H2BS36ph), leading to promote transcription. Acts as a key regulator of cell growth and proliferation by phosphorylating FNIP1, TSC2, RPTOR, WDR24 and ATG1/ULK1: in response to nutrient limitation, negatively regulates the mTORC1 complex by phosphorylating RPTOR component of the mTORC1 complex and by phosphorylating and activating TSC2. Also phosphorylates and inhibits GATOR2 subunit WDR24 in response to nutrient limitation, leading to suppress glucose-mediated mTORC1 activation. In response to energetic stress, phosphorylates FNIP1, inactivating the non-canonical mTORC1 signaling, thereby promoting nuclear translocation of TFEB and TFE3, and inducing transcription of lysosomal or autophagy genes. In response to nutrient limitation, promotes autophagy by phosphorylating and activating ATG1/ULK1. In that process also activates WDR45/WIPI4. Phosphorylates CASP6, thereby preventing its autoprocessing and subsequent activation. In response to nutrient limitation, phosphorylates transcription factor FOXO3 promoting FOXO3 mitochondrial import. Also acts as a regulator of cellular polarity by remodeling the actin cytoskeleton; probably by indirectly activating myosin. AMPK also acts as a regulator of circadian rhythm by mediating phosphorylation of CRY1, leading to destabilize it. May regulate the Wnt signaling pathway by phosphorylating CTNNB1, leading to stabilize it. Also has tau-protein kinase activity: in response to amyloid beta A4 protein (APP) exposure, activated by CAMKK2, leading to phosphorylation of MAPT/TAU; however the relevance of such data remains unclear in vivo. Also phosphorylates CFTR, EEF2K, KLC1, NOS3 and SLC12A1. Regulates hepatic lipogenesis. Activated via SIRT3, represses sterol regulatory element-binding protein (SREBP) transcriptional activities and ATP-consuming lipogenesis to restore cellular energy balance. Upon stress, regulates mitochondrial fragmentation through phosphorylation of MTFR1L. This is 5'-AMP-activated protein kinase catalytic subunit alpha-1 (PRKAA1) from Pongo abelii (Sumatran orangutan).